The chain runs to 487 residues: Neuronal immunoglobulin domain-containing protein rig-3 (487 aa).

The signal sequence occupies residues 1 to 23 (MGRLLAKMLFPLAMCLFVSAVSA). 2 Ig-like domains span residues 34–139 (PIVI…KTIK) and 247–354 (PEFE…PKVT). 2 cysteine pairs are disulfide-bonded: Cys61/Cys124 and Cys271/Cys327. Asp466 carries the GPI-anchor amidated aspartate lipid modification. Residues 467–487 (SASDSKFPLALATLFFVCLFI) constitute a propeptide, removed in mature form.

As to expression, expressed in the cholinergic motor neurons AS, VA and DA in the ventral nerve cord and in the mechanosensory ALM neurons in the midbody.

Its subcellular location is the cell projection. It localises to the axon. The protein localises to the synapse. The protein resides in the cell membrane. Its function is as follows. Cell surface protein which plays a role in the plasticity of cholinergic synapses at neuromuscular junctions and in the polarity of the mechanosensory neuron ALM, possibly by antagonizing Wnt signaling. This is Neuronal immunoglobulin domain-containing protein rig-3 from Caenorhabditis elegans.